Consider the following 188-residue polypeptide: MDKLRLVVGLGNLGKQYAETRHNAGFKVIDRLLSLYHVQLEERNNLGEFILLRKHKVVLAKPNTYMNHSGKFVKWACQNWNIKPDKVMVVYDELAFPLGTVRLKMQGSANNHNGIKSVIAHLNTEHFNRLRFGIKSDNTSNILHEVVMSEFTPAERNLLETALTKAIEALKGYIDGVTMLKLMEVFNA.

Y17 contributes to the tRNA binding site. H22 acts as the Proton acceptor in catalysis. Residues Y65, N67, and N113 each contribute to the tRNA site.

Belongs to the PTH family. As to quaternary structure, monomer.

It is found in the cytoplasm. It catalyses the reaction an N-acyl-L-alpha-aminoacyl-tRNA + H2O = an N-acyl-L-amino acid + a tRNA + H(+). Hydrolyzes ribosome-free peptidyl-tRNAs (with 1 or more amino acids incorporated), which drop off the ribosome during protein synthesis, or as a result of ribosome stalling. Its function is as follows. Catalyzes the release of premature peptidyl moieties from peptidyl-tRNA molecules trapped in stalled 50S ribosomal subunits, and thus maintains levels of free tRNAs and 50S ribosomes. The protein is Peptidyl-tRNA hydrolase of Mycoplasma pneumoniae (strain ATCC 29342 / M129 / Subtype 1) (Mycoplasmoides pneumoniae).